We begin with the raw amino-acid sequence, 923 residues long: Dynein axonemal intermediate chain 3 (923 aa).

The disordered stretch occupies residues 1-35 (MAPKPPKSPKGQKKGKKNMKQQLLVPEEEEPMNME). Residues 10–19 (KGQKKGKKNM) are compositionally biased toward basic residues. WD repeat units follow at residues 398 to 438 (ESPD…DRIE), 480 to 536 (GHRK…PAVT), 702 to 741 (VHDG…GPLL), and 745 to 785 (CGPK…HEPA). Positions 869–889 (LELVKKKAKIYQKTKEQMEAE) form a coiled coil.

As to quaternary structure, interacts with ACTR2; this interaction reduces binding of the Arp2/3 complex to the VCA domain of nucleation promoting factors. Part of the multisubunit axonemal dynein complex formed at least of two heavy chains and a number of intermediate and light chains. Found in a associated with the catalytic heavy chain DNAH2, the intermediate chain DNAI4, and the light chain DYNLT1. Strongly expressed in the testes. Detected also in brain and lung tissues.

Its subcellular location is the cytoplasm. Acts as a negative regulator of cell migration, invasion, and metastasis downstream of p53/TP53, through inhibition of Arp2/3 complex-mediated actin polymerization. Via its association with the multisubunit axonemal dynein complex, is potentially involved in the regulation of cilia function. May play a role in osteogenesis of dental tissue-derived mesenchymal stem cells. This is Dynein axonemal intermediate chain 3 (Dnai3) from Mus musculus (Mouse).